The chain runs to 367 residues: DNA replication and repair protein RecF (367 aa).

30-37 (GNNAQGKT) contacts ATP.

It belongs to the RecF family.

It localises to the cytoplasm. In terms of biological role, the RecF protein is involved in DNA metabolism; it is required for DNA replication and normal SOS inducibility. RecF binds preferentially to single-stranded, linear DNA. It also seems to bind ATP. The chain is DNA replication and repair protein RecF from Clostridium tetani (strain Massachusetts / E88).